The following is a 400-amino-acid chain: Acetate kinase (400 aa).

Residue Asn10 coordinates Mg(2+). Lys17 contributes to the ATP binding site. Arg91 lines the substrate pocket. Catalysis depends on Asp150, which acts as the Proton donor/acceptor. ATP-binding positions include 210–214 (HLGNG), 285–287 (DCR), and 333–337 (GIGEN). Residue Glu387 participates in Mg(2+) binding.

This sequence belongs to the acetokinase family. As to quaternary structure, homodimer. It depends on Mg(2+) as a cofactor. Mn(2+) serves as cofactor.

It localises to the cytoplasm. It catalyses the reaction acetate + ATP = acetyl phosphate + ADP. It participates in metabolic intermediate biosynthesis; acetyl-CoA biosynthesis; acetyl-CoA from acetate: step 1/2. Functionally, catalyzes the formation of acetyl phosphate from acetate and ATP. Can also catalyze the reverse reaction. This chain is Acetate kinase, found in Photorhabdus laumondii subsp. laumondii (strain DSM 15139 / CIP 105565 / TT01) (Photorhabdus luminescens subsp. laumondii).